Reading from the N-terminus, the 131-residue chain is MRQFPSIRGNINEKMMTTMVESQTRSPWRTPVPYLFGGLAAMLGLIAFALLLLACSYWRLSRQTEDEEKQTESGEKVVAKAFEEKILVIMAGQNNPTFLATPVAAKICLDCVNMEKKEGQNGESKVTEENH.

At 1-34 the chain is on the extracellular side; sequence MRQFPSIRGNINEKMMTTMVESQTRSPWRTPVPY. Residues 35–55 traverse the membrane as a helical segment; sequence LFGGLAAMLGLIAFALLLLAC. Over 56–131 the chain is Cytoplasmic; sequence SYWRLSRQTE…GESKVTEENH (76 aa). A VIMAG motif is present at residues 88–92; it reads VIMAG.

It belongs to the GLUTAMINE DUMPER 1 (TC 9.B.60) family. As to expression, expressed in the vascular tissues. Also detected in guard cells.

The protein localises to the membrane. Probable subunit of an amino acid transporter involved in the regulation of the amino acid metabolism. Stimulates amino acid export by activating nonselective amino acid facilitators. The sequence is that of Protein GLUTAMINE DUMPER 5 (GDU5) from Arabidopsis thaliana (Mouse-ear cress).